Here is a 120-residue protein sequence, read N- to C-terminus: Small ribosomal subunit protein bS16 (120 aa).

Over residues 84 to 110 (KREVKSNPEKAKPGKRAQERAAEKAQK) the composition is skewed to basic and acidic residues. The tract at residues 84–120 (KREVKSNPEKAKPGKRAQERAAEKAQKAADAAAATAE) is disordered. The span at 111-120 (AADAAAATAE) shows a compositional bias: low complexity.

Belongs to the bacterial ribosomal protein bS16 family.

This Rhizobium rhizogenes (strain K84 / ATCC BAA-868) (Agrobacterium radiobacter) protein is Small ribosomal subunit protein bS16.